Reading from the N-terminus, the 351-residue chain is S-adenosylmethionine:tRNA ribosyltransferase-isomerase (351 aa).

It belongs to the QueA family. As to quaternary structure, monomer.

It is found in the cytoplasm. It catalyses the reaction 7-aminomethyl-7-carbaguanosine(34) in tRNA + S-adenosyl-L-methionine = epoxyqueuosine(34) in tRNA + adenine + L-methionine + 2 H(+). It functions in the pathway tRNA modification; tRNA-queuosine biosynthesis. Functionally, transfers and isomerizes the ribose moiety from AdoMet to the 7-aminomethyl group of 7-deazaguanine (preQ1-tRNA) to give epoxyqueuosine (oQ-tRNA). The sequence is that of S-adenosylmethionine:tRNA ribosyltransferase-isomerase from Photobacterium profundum (strain SS9).